Consider the following 147-residue polypeptide: Diaminohydroxyphosphoribosylamino-pyrimidine deaminase (147 aa).

Positions 1 to 123 (MNDIFYMKRA…YLKKHGICVK (123 aa)) constitute a CMP/dCMP-type deaminase domain. His-50 is a binding site for Zn(2+). Glu-52 functions as the Proton donor in the catalytic mechanism. Positions 75 and 84 each coordinate Zn(2+).

Belongs to the cytidine and deoxycytidylate deaminase family. It depends on Zn(2+) as a cofactor.

The enzyme catalyses 2,5-diamino-6-hydroxy-4-(5-phosphoribosylamino)-pyrimidine + H2O + H(+) = 5-amino-6-(5-phospho-D-ribosylamino)uracil + NH4(+). It functions in the pathway cofactor biosynthesis; riboflavin biosynthesis; 5-amino-6-(D-ribitylamino)uracil from GTP: step 2/4. The chain is Diaminohydroxyphosphoribosylamino-pyrimidine deaminase (ribD1) from Buchnera aphidicola subsp. Acyrthosiphon pisum (strain APS) (Acyrthosiphon pisum symbiotic bacterium).